The chain runs to 83 residues: Aspergillic acid biosynthesis cluster protein F (83 aa).

It participates in secondary metabolite biosynthesis. Functionally, part of the gene cluster that mediates the biosynthesis of aspergillic acid, a hydroxamic acid-containing pyrazinone with aliphatic side chains that originates from leucine (Leu) and isoleucine (Ile). Aspergillic acid has antibiotic properties and was shown to be lethal to mice. The first step in the pathway is the production of deoxyaspergillic acid via a condensation between the Ile amine and the Leu carboxylic acid, followed by a reductive release from the protein forming the dipeptide aldehyde NH(2)-Leu-Ile-CHO, which could undergo an intermolecular cyclization resulting in a dihydropyrazinone. As the NRPS asaC lacks a condensation domain, it is improbable that it is responsible for condensation of Leu and Ile. One possibility is that asaC acts on a previously condensed dipeptide and functions as a Leu-Ile reductase to yield deoxyaspergillic acid. After asaC forms deoxyaspergillic acid, the cytochrome P450 asaD oxidizes the pyrazinone to the hydroxamic acid-containing bioactive metabolite aspergillic acid. The hydroxylase/desaturase asaB can then convert aspergillic acid to hydroxyaspergillic acid. Both aspergillic acid and hydroxyaspergillic acid can form complexes with iron producing ferriaspergillin analogs. The chain is Aspergillic acid biosynthesis cluster protein F from Aspergillus flavus (strain ATCC 200026 / FGSC A1120 / IAM 13836 / NRRL 3357 / JCM 12722 / SRRC 167).